A 262-amino-acid chain; its full sequence is Shikimate dehydrogenase (NADP(+)) (262 aa).

Residues 15–17 and threonine 62 each bind shikimate; that span reads SRS. Catalysis depends on lysine 66, which acts as the Proton acceptor. Residue glutamate 78 participates in NADP(+) binding. Shikimate is bound by residues asparagine 87 and aspartate 102. Residues 126 to 130, 150 to 155, and methionine 214 each bind NADP(+); these read GAGGA and NRTLAR. Tyrosine 216 provides a ligand contact to shikimate. Glycine 236 contacts NADP(+).

This sequence belongs to the shikimate dehydrogenase family. In terms of assembly, homodimer.

It carries out the reaction shikimate + NADP(+) = 3-dehydroshikimate + NADPH + H(+). The protein operates within metabolic intermediate biosynthesis; chorismate biosynthesis; chorismate from D-erythrose 4-phosphate and phosphoenolpyruvate: step 4/7. In terms of biological role, involved in the biosynthesis of the chorismate, which leads to the biosynthesis of aromatic amino acids. Catalyzes the reversible NADPH linked reduction of 3-dehydroshikimate (DHSA) to yield shikimate (SA). The sequence is that of Shikimate dehydrogenase (NADP(+)) from Acinetobacter baumannii (strain AB307-0294).